The chain runs to 62 residues: Conorfamide-Tx1 (62 aa).

The first 19 residues, 1–19 (MSGRGFLLLALLLLVTVEA), serve as a signal peptide directing secretion. A propeptide spanning residues 20–26 (TKVEKNK) is cleaved from the precursor. Position 46 is a tyrosine amide (tyrosine 46). Residues 47 to 62 (GRRDMQSPLLSERLRF) constitute a propeptide that is removed on maturation.

The protein belongs to the FARP (FMRFamide related peptide) family. Expressed by the venom duct.

The protein resides in the secreted. This peptide does not show activity on human and mouse sensory neuron-specific G-protein coupled receptors MRGPRX1. This chain is Conorfamide-Tx1, found in Conus textile (Cloth-of-gold cone).